Here is a 644-residue protein sequence, read N- to C-terminus: Exoribonuclease 2 (644 aa).

The RNB domain maps to 189-516 (REDLTALDFV…NHRLLKAIIK (328 aa)). An S1 motif domain is found at 561–643 (DSRFAAEIID…ETRSVIARPV (83 aa)).

This sequence belongs to the RNR ribonuclease family. RNase II subfamily.

The protein resides in the cytoplasm. The catalysed reaction is Exonucleolytic cleavage in the 3'- to 5'-direction to yield nucleoside 5'-phosphates.. Involved in mRNA degradation. Hydrolyzes single-stranded polyribonucleotides processively in the 3' to 5' direction. This chain is Exoribonuclease 2, found in Cronobacter sakazakii (strain ATCC BAA-894) (Enterobacter sakazakii).